The following is a 307-amino-acid chain: Protoheme IX farnesyltransferase (307 aa).

Helical transmembrane passes span 32–52 (MGIVNSNTLTVFTGFWLALHF), 65–85 (FFTIVGSGLVMAGVCCLNNYI), 108–128 (PGFALTFGLVILLLGFVFLLL), 131–151 (PMAVLMGFIGAFTYVVLYSLW), 158–178 (LNTVVGSISGAVPPLIGWAAI), 186–206 (IAWMLFLIMFIWQIPHFLALA), 251–271 (LGITFMVIATLLNIGWIVLGF), and 287–307 (FVYSLNYLTILFVSMIVVTFF).

The protein belongs to the UbiA prenyltransferase family. Protoheme IX farnesyltransferase subfamily. Interacts with CtaA.

The protein localises to the cell membrane. The enzyme catalyses heme b + (2E,6E)-farnesyl diphosphate + H2O = Fe(II)-heme o + diphosphate. It participates in porphyrin-containing compound metabolism; heme O biosynthesis; heme O from protoheme: step 1/1. Its function is as follows. Converts heme B (protoheme IX) to heme O by substitution of the vinyl group on carbon 2 of heme B porphyrin ring with a hydroxyethyl farnesyl side group. The polypeptide is Protoheme IX farnesyltransferase (Bacillus cereus (strain G9842)).